The chain runs to 424 residues: Kynureninase (424 aa).

Residues L106, T107, 134 to 137, D219, H222, and Y244 contribute to the pyridoxal 5'-phosphate site; that span reads FPSD. An N6-(pyridoxal phosphate)lysine modification is found at K245. W274 and N302 together coordinate pyridoxal 5'-phosphate.

This sequence belongs to the kynureninase family. As to quaternary structure, homodimer. Requires pyridoxal 5'-phosphate as cofactor.

The enzyme catalyses L-kynurenine + H2O = anthranilate + L-alanine + H(+). It carries out the reaction 3-hydroxy-L-kynurenine + H2O = 3-hydroxyanthranilate + L-alanine + H(+). It participates in amino-acid degradation; L-kynurenine degradation; L-alanine and anthranilate from L-kynurenine: step 1/1. It functions in the pathway cofactor biosynthesis; NAD(+) biosynthesis; quinolinate from L-kynurenine: step 2/3. Its function is as follows. Catalyzes the cleavage of L-kynurenine (L-Kyn) and L-3-hydroxykynurenine (L-3OHKyn) into anthranilic acid (AA) and 3-hydroxyanthranilic acid (3-OHAA), respectively. This is Kynureninase from Xanthomonas campestris pv. campestris (strain 8004).